A 590-amino-acid polypeptide reads, in one-letter code: Aspartate--tRNA ligase (590 aa).

Glu180 lines the L-aspartate pocket. The interval 204–207 is aspartate; that stretch reads QLFK. Arg226 is a binding site for L-aspartate. Residues 226 to 228 and Gln235 each bind ATP; that span reads RDE. His454 serves as a coordination point for L-aspartate. Position 488 (Glu488) interacts with ATP. Residue Arg495 coordinates L-aspartate. 540–543 contributes to the ATP binding site; that stretch reads GFDR.

It belongs to the class-II aminoacyl-tRNA synthetase family. Type 1 subfamily. Homodimer.

The protein resides in the cytoplasm. It carries out the reaction tRNA(Asp) + L-aspartate + ATP = L-aspartyl-tRNA(Asp) + AMP + diphosphate. In terms of biological role, catalyzes the attachment of L-aspartate to tRNA(Asp) in a two-step reaction: L-aspartate is first activated by ATP to form Asp-AMP and then transferred to the acceptor end of tRNA(Asp). This Clostridium kluyveri (strain NBRC 12016) protein is Aspartate--tRNA ligase.